A 432-amino-acid polypeptide reads, in one-letter code: D-amino acid dehydrogenase (432 aa).

3–17 (VVILGSGVVGVTSAW) contributes to the FAD binding site.

Belongs to the DadA oxidoreductase family. FAD serves as cofactor.

The enzyme catalyses a D-alpha-amino acid + A + H2O = a 2-oxocarboxylate + AH2 + NH4(+). The protein operates within amino-acid degradation; D-alanine degradation; NH(3) and pyruvate from D-alanine: step 1/1. Its function is as follows. Oxidative deamination of D-amino acids. The chain is D-amino acid dehydrogenase from Escherichia fergusonii (strain ATCC 35469 / DSM 13698 / CCUG 18766 / IAM 14443 / JCM 21226 / LMG 7866 / NBRC 102419 / NCTC 12128 / CDC 0568-73).